The sequence spans 193 residues: Ribosomal RNA large subunit methyltransferase E (193 aa).

The S-adenosyl-L-methionine site is built by G48, F50, D67, N85, and D107. K147 acts as the Proton acceptor in catalysis.

Belongs to the class I-like SAM-binding methyltransferase superfamily. RNA methyltransferase RlmE family.

It localises to the cytoplasm. The enzyme catalyses uridine(2552) in 23S rRNA + S-adenosyl-L-methionine = 2'-O-methyluridine(2552) in 23S rRNA + S-adenosyl-L-homocysteine + H(+). Functionally, specifically methylates the uridine in position 2552 of 23S rRNA at the 2'-O position of the ribose in the fully assembled 50S ribosomal subunit. In Borrelia duttonii (strain Ly), this protein is Ribosomal RNA large subunit methyltransferase E.